A 727-amino-acid chain; its full sequence is 5'-AMP-activated serine/threonine-protein kinase catalytic subunit alpha (727 aa).

Residues 31–284 (YRLDKTLGIG…IHEIRNHPWF (254 aa)) form the Protein kinase domain. Residues 37–45 (LGIGSFGKV) and Lys-60 contribute to the ATP site. Asp-154 acts as the Proton acceptor in catalysis. Thr-188 is modified (phosphothreonine). The interval 382 to 590 (FTTTTGFNPS…GSNNNSYEGG (209 aa)) is disordered. Composition is skewed to low complexity over residues 391–483 (SNSN…SSIS) and 494–586 (NLNN…NNNS). One can recognise a KA1 domain in the interval 679–727 (RMVNGKPIKLVLQLFRVAENRYLLDIKKIEGEIFIFFDICSLMLEELNL).

The protein belongs to the protein kinase superfamily. CAMK Ser/Thr protein kinase family. SNF1 subfamily. Heterotrimer of an alpha catalytic subunit, a beta and a gamma non-catalytic subunits.

It catalyses the reaction L-seryl-[protein] + ATP = O-phospho-L-seryl-[protein] + ADP + H(+). It carries out the reaction L-threonyl-[protein] + ATP = O-phospho-L-threonyl-[protein] + ADP + H(+). Activated enzyme phosphorylates target proteins and initiates downstream signaling pathways that shift metabolism from anabolic to catabolic pathways. Acts as a highly sensitive cellular energy sensor. The sequence is that of 5'-AMP-activated serine/threonine-protein kinase catalytic subunit alpha (snfA) from Dictyostelium discoideum (Social amoeba).